Here is a 118-residue protein sequence, read N- to C-terminus: Basic phospholipase A2 CM-II (118 aa).

Cystine bridges form between Cys-11/Cys-70, Cys-26/Cys-117, Cys-28/Cys-44, Cys-43/Cys-98, Cys-50/Cys-91, Cys-59/Cys-84, and Cys-77/Cys-89. Tyr-27, Gly-29, and Gly-31 together coordinate Ca(2+). The active site involves His-47. Position 48 (Asp-48) interacts with Ca(2+). Asp-92 is an active-site residue.

It belongs to the phospholipase A2 family. Group I subfamily. D49 sub-subfamily. Requires Ca(2+) as cofactor. Expressed by the venom gland.

It localises to the secreted. The enzyme catalyses a 1,2-diacyl-sn-glycero-3-phosphocholine + H2O = a 1-acyl-sn-glycero-3-phosphocholine + a fatty acid + H(+). Its function is as follows. Snake venom phospholipase A2 (PLA2) that causes myonecrosis when injected intramuscularly, causes neuromuscular blockade with a gradual contracture and a decreased sensitivity to ACh and KCl (in the chick biventer cervicis nerve-muscle preparation), abolishes twitches evoked by indirect stimulation earlier than those by direct stimulation (in the mouse phrenic nerve-diaphragm preparation), shows indirect hemolytic activity, and shows weak anticoagulant activity. PLA2 catalyzes the calcium-dependent hydrolysis of the 2-acyl groups in 3-sn-phosphoglycerides. The chain is Basic phospholipase A2 CM-II from Naja mossambica (Mozambique spitting cobra).